The sequence spans 386 residues: Aspergillopepsin-1 (386 aa).

The signal sequence occupies residues 1-20 (MVVFSKVAAAAFGLSAVASA). A propeptide spans 21–69 (MPAAPPRQGFTINQLTRAIPKRTINLPAIYANALSKYGGNVPPHIQDAM) (activation peptide). The Peptidase A1 domain maps to 85 to 383 (YLTPVAVGGT…DSEGPQLGFA (299 aa)). Residue Asp-101 is part of the active site. Asn-130 carries an N-linked (GlcNAc...) asparagine glycan. Asp-275 is an active-site residue. Cys-311 and Cys-346 are oxidised to a cystine.

This sequence belongs to the peptidase A1 family. As to quaternary structure, monomer.

Its subcellular location is the secreted. It catalyses the reaction Hydrolysis of proteins with broad specificity. Generally favors hydrophobic residues in P1 and P1', but also accepts Lys in P1, which leads to activation of trypsinogen. Does not clot milk.. Secreted aspartic endopeptidase that allows assimilation of proteinaceous substrates. The scissile peptide bond is attacked by a nucleophilic water molecule activated by two aspartic residues in the active site. Shows a broad primary substrate specificity. Favors hydrophobic residues at the P1 and P1' positions, but also accepts a lysine residue in the P1 position, leading to the activation of trypsinogen and chymotrypsinogen A. The protein is Aspergillopepsin-1 of Emericella nidulans (strain FGSC A4 / ATCC 38163 / CBS 112.46 / NRRL 194 / M139) (Aspergillus nidulans).